Here is a 138-residue protein sequence, read N- to C-terminus: CLAVATA3/ESR (CLE)-related protein 2 (138 aa).

The first 22 residues, 1–22, serve as a signal peptide directing secretion; it reads MPNIFKILLIVLLAVVSFRLSA. The segment at 23–90 is required for secretion from the host cytoplasm to the host apoplasm; that stretch reads STGDKKTAND…VPSHVTNRSM (68 aa). 3 N-linked (GlcNAc...) asparagine glycosylation sites follow: asparagine 37, asparagine 87, and asparagine 123. Disordered regions lie at residues 66–97 and 116–138; these read AIGRSNAQGGNAAGLVPSHVTNRSMAPPPPPV and LAEKMPVNESKRLSPSGPDPHHH. Positions 127 to 138 match the CLE motif; the sequence is RLSPSGPDPHHH.

It belongs to the CLV3/ESR signal peptide family. In terms of tissue distribution, highly expressed exclusively within the dorsal esophageal gland cell during syncytium formation in host plants (at protein level).

The protein localises to the secreted. It is found in the host cytoplasm. Its subcellular location is the host extracellular space. It localises to the extracellular space. The protein resides in the apoplast. Its function is as follows. Mimics host plant CLE extracellular signal peptides that regulate cell fate. May play a role in the differentiation or division of feeding cells (syncytia) induced in plant roots during infection. The chain is CLAVATA3/ESR (CLE)-related protein 2 (CLE2) from Heterodera glycines (Soybean cyst nematode worm).